The following is a 521-amino-acid chain: Apolipoprotein N-acyltransferase (521 aa).

6 helical membrane-spanning segments follow: residues 34–54 (LAAP…PLLV), 64–84 (AFWL…RWLL), 100–120 (LAIA…VIGL), 137–157 (LFAV…ETAF), 176–196 (VALG…ALVA), and 206–226 (YAGL…WQLA). The region spanning 240 to 480 (IQGNIAQARK…YAAFVEPVRL (241 aa)) is the CN hydrolase domain. The active-site Proton acceptor is the Glu281. Lys341 is a catalytic residue. The active-site Nucleophile is the Cys392. Residues 488–508 (ALWGDWFVPLSAALALLGLIA) traverse the membrane as a helical segment.

It belongs to the CN hydrolase family. Apolipoprotein N-acyltransferase subfamily.

It is found in the cell inner membrane. It carries out the reaction N-terminal S-1,2-diacyl-sn-glyceryl-L-cysteinyl-[lipoprotein] + a glycerophospholipid = N-acyl-S-1,2-diacyl-sn-glyceryl-L-cysteinyl-[lipoprotein] + a 2-acyl-sn-glycero-3-phospholipid + H(+). The protein operates within protein modification; lipoprotein biosynthesis (N-acyl transfer). Its function is as follows. Catalyzes the phospholipid dependent N-acylation of the N-terminal cysteine of apolipoprotein, the last step in lipoprotein maturation. The polypeptide is Apolipoprotein N-acyltransferase (Gloeobacter violaceus (strain ATCC 29082 / PCC 7421)).